The following is an 815-amino-acid chain: Translation initiation factor IF-2 (815 aa).

The tr-type G domain maps to 315 to 482 (ARPPVVTIMG…AISLTAEVLE (168 aa)). The tract at residues 324–331 (GHVDHGKT) is G1. Residue 324 to 331 (GHVDHGKT) participates in GTP binding. Residues 349–353 (GITQH) form a G2 region. A G3 region spans residues 370–373 (DTPG). Residues 370-374 (DTPGH) and 424-427 (NKID) contribute to the GTP site. The tract at residues 424-427 (NKID) is G4. The segment at 460–462 (SAY) is G5.

The protein belongs to the TRAFAC class translation factor GTPase superfamily. Classic translation factor GTPase family. IF-2 subfamily.

The protein resides in the cytoplasm. Its function is as follows. One of the essential components for the initiation of protein synthesis. Protects formylmethionyl-tRNA from spontaneous hydrolysis and promotes its binding to the 30S ribosomal subunits. Also involved in the hydrolysis of GTP during the formation of the 70S ribosomal complex. The polypeptide is Translation initiation factor IF-2 (Ruthia magnifica subsp. Calyptogena magnifica).